Reading from the N-terminus, the 132-residue chain is Small ribosomal subunit protein uS8 (132 aa).

Belongs to the universal ribosomal protein uS8 family. In terms of assembly, part of the 30S ribosomal subunit. Contacts proteins S5 and S12.

One of the primary rRNA binding proteins, it binds directly to 16S rRNA central domain where it helps coordinate assembly of the platform of the 30S subunit. This is Small ribosomal subunit protein uS8 from Corynebacterium glutamicum (strain R).